A 321-amino-acid chain; its full sequence is Epoxyqueuosine reductase (321 aa).

Asp137 acts as the Proton donor in catalysis. The 4Fe-4S ferredoxin-type domain occupies Glu179–Val211. The [4Fe-4S] cluster site is built by Cys191, Cys194, Cys197, Cys201, Cys217, Cys245, Cys248, and Cys252.

This sequence belongs to the QueG family. In terms of assembly, monomer. It depends on cob(II)alamin as a cofactor. [4Fe-4S] cluster serves as cofactor.

It localises to the cytoplasm. It catalyses the reaction epoxyqueuosine(34) in tRNA + AH2 = queuosine(34) in tRNA + A + H2O. It participates in tRNA modification; tRNA-queuosine biosynthesis. Its function is as follows. Catalyzes the conversion of epoxyqueuosine (oQ) to queuosine (Q), which is a hypermodified base found in the wobble positions of tRNA(Asp), tRNA(Asn), tRNA(His) and tRNA(Tyr). This Synechococcus sp. (strain CC9605) protein is Epoxyqueuosine reductase.